We begin with the raw amino-acid sequence, 457 residues long: Choline kinase alpha (457 aa).

Positions 1 to 86 (MKTKFCTGGE…PPADEQPEPR (86 aa)) are disordered. The span at 13-32 (PSPLGLLLSCGSGSAAPAPG) shows a compositional bias: low complexity. Residues 55–80 (LALPPPPPLPLPLPLPQPPPPQPPAD) show a composition bias toward pro residues. Residues 117 to 123 (RGGLSNM), R146, and 207 to 213 (QFIPSRR) contribute to the ATP site. 119–121 (GLS) lines the phosphocholine pocket. K247 is subject to N6-acetyllysine. S279 bears the Phosphoserine mark. ATP contacts are provided by Q308 and D330.

It belongs to the choline/ethanolamine kinase family. Homodimer. Heterodimer with CHKB. In terms of assembly, monomer; acetylation by KAT5 promotes dissociation of the homodimer and monomerization. As to quaternary structure, (Microbial infection) Interacts with PI4KA/PI4KIIIalpha; CHKA bridges PI4KA/PI4KIIIalpha and hepatitis C virus (HCV) non-structural protein 5A (NS5A) and potentiates NS5A-stimulated PI4KA activity, which then facilitates the targeting of the ternary complex to the ER for viral replication. In terms of processing, phosphorylated at Ser-279 by AMPK in response to glucose deprivation, leading to localization to lipid droplets. Acetylated by KAT5 at Lys-247 following phosphorylation by AMPK, leading to monomerization and conversion into a tyrosine-protein kinase.

The protein localises to the cytoplasm. It is found in the cytosol. The protein resides in the lipid droplet. The catalysed reaction is choline + ATP = phosphocholine + ADP + H(+). It carries out the reaction ethanolamine + ATP = phosphoethanolamine + ADP + H(+). It catalyses the reaction L-tyrosyl-[protein] + ATP = O-phospho-L-tyrosyl-[protein] + ADP + H(+). Its pathway is phospholipid metabolism; phosphatidylcholine biosynthesis; phosphocholine from choline: step 1/1. It functions in the pathway phospholipid metabolism; phosphatidylethanolamine biosynthesis; phosphatidylethanolamine from ethanolamine: step 1/3. With respect to regulation, homodimerization or heterodimerization is required for the choline and ethanolamine kinase activities. In terms of biological role, plays a key role in phospholipid biosynthesis by catalyzing the phosphorylation of free choline to phosphocholine, the first step in phosphatidylcholine biosynthesis. Also phosphorylates ethanolamine, thereby contributing to phosphatidylethanolamine biosynthesis. Has higher activity with choline. May contribute to tumor cell growth. This isoform plays a key role in lipolysis of lipid droplets following glucose deprivation. In response to glucose deprivation, phosphorylated by AMPK, promoting localization to lipid droplets. Phosphorylation is followed by acetylation by KAT5, leading to dissociation of the homodimer into a monomer. Monomeric CHKA isoform 1 is converted into a tyrosine-protein kinase, which phosphorylates lipid droplet structural proteins PLIN2 and PLIN3, leading to lipolysis of lipid droplets. The polypeptide is Choline kinase alpha (CHKA) (Homo sapiens (Human)).